Consider the following 429-residue polypeptide: Adenylosuccinate synthetase (429 aa).

Residues 12-18 and 40-42 each bind GTP; these read GDEGKGK and GHT. Asp-13 serves as the catalytic Proton acceptor. Asp-13 and Gly-40 together coordinate Mg(2+). IMP contacts are provided by residues 13-16, 38-41, Thr-129, Arg-143, Gln-223, Thr-238, and Arg-302; these read DEGK and NAGH. His-41 serves as the catalytic Proton donor. 298–304 contributes to the substrate binding site; it reads TVTGRKR. GTP is bound by residues Arg-304, 330 to 332, and 412 to 414; these read KLD and STS.

Belongs to the adenylosuccinate synthetase family. As to quaternary structure, homodimer. Mg(2+) serves as cofactor.

It localises to the cytoplasm. The catalysed reaction is IMP + L-aspartate + GTP = N(6)-(1,2-dicarboxyethyl)-AMP + GDP + phosphate + 2 H(+). It participates in purine metabolism; AMP biosynthesis via de novo pathway; AMP from IMP: step 1/2. In terms of biological role, plays an important role in the de novo pathway of purine nucleotide biosynthesis. Catalyzes the first committed step in the biosynthesis of AMP from IMP. This chain is Adenylosuccinate synthetase, found in Novosphingobium aromaticivorans (strain ATCC 700278 / DSM 12444 / CCUG 56034 / CIP 105152 / NBRC 16084 / F199).